The sequence spans 194 residues: Large ribosomal subunit protein uL10 (194 aa).

The segment covering 172–187 (EGGAAEAPAEAATEAP) has biased composition (low complexity). The interval 172 to 194 (EGGAAEAPAEAATEAPAEAEAES) is disordered.

This sequence belongs to the universal ribosomal protein uL10 family. As to quaternary structure, part of the ribosomal stalk of the 50S ribosomal subunit. The N-terminus interacts with L11 and the large rRNA to form the base of the stalk. The C-terminus forms an elongated spine to which L12 dimers bind in a sequential fashion forming a multimeric L10(L12)X complex.

Its function is as follows. Forms part of the ribosomal stalk, playing a central role in the interaction of the ribosome with GTP-bound translation factors. The protein is Large ribosomal subunit protein uL10 of Rhodococcus erythropolis (strain PR4 / NBRC 100887).